Reading from the N-terminus, the 443-residue chain is Aspartate--tRNA(Asp/Asn) ligase (443 aa).

Glutamate 175 lines the L-aspartate pocket. The aspartate stretch occupies residues 197–200 (QLFK). Residue arginine 219 coordinates L-aspartate. Residues 219 to 221 (RAE), 227 to 229 (RHL), and glutamate 366 contribute to the ATP site. The Mg(2+) site is built by glutamate 366 and serine 369. The L-aspartate site is built by serine 369 and arginine 373. Residue 414-417 (GCER) coordinates ATP.

It belongs to the class-II aminoacyl-tRNA synthetase family. Type 2 subfamily. In terms of assembly, homodimer. Requires Mg(2+) as cofactor.

Its subcellular location is the cytoplasm. It carries out the reaction tRNA(Asx) + L-aspartate + ATP = L-aspartyl-tRNA(Asx) + AMP + diphosphate. In terms of biological role, aspartyl-tRNA synthetase with relaxed tRNA specificity since it is able to aspartylate not only its cognate tRNA(Asp) but also tRNA(Asn). Reaction proceeds in two steps: L-aspartate is first activated by ATP to form Asp-AMP and then transferred to the acceptor end of tRNA(Asp/Asn). The protein is Aspartate--tRNA(Asp/Asn) ligase of Methanococcoides burtonii (strain DSM 6242 / NBRC 107633 / OCM 468 / ACE-M).